Here is a 108-residue protein sequence, read N- to C-terminus: Holo-[acyl-carrier-protein] synthase (108 aa).

Mg(2+) contacts are provided by aspartate 9 and glutamate 54.

Belongs to the P-Pant transferase superfamily. AcpS family. Mg(2+) serves as cofactor.

The protein resides in the cytoplasm. It catalyses the reaction apo-[ACP] + CoA = holo-[ACP] + adenosine 3',5'-bisphosphate + H(+). In terms of biological role, transfers the 4'-phosphopantetheine moiety from coenzyme A to a Ser of acyl-carrier-protein. In Mycoplasmopsis pulmonis (strain UAB CTIP) (Mycoplasma pulmonis), this protein is Holo-[acyl-carrier-protein] synthase.